Reading from the N-terminus, the 522-residue chain is MDSGLGRSSETSLKALPSMASNATRNTDPDQQGVRFSSMDQPPCFARPGQSFPAFPPLFGVQSSSLYLPDDIEAKIGNQFESNPSPNNPTMDWDPQAMLSNLSFLEQKIKQVKDIVQSMSNRESQVAGGSSEAQAKQQLVTADLTCIIIQLISTAGSLLPSMKNPISSNPALRHLSNTLCAPMILGTNCNLRPSANDEATIPDISKTHDYEELMNSLNTTQAESDEMMNCQNPCGGEGSEPIPMEDHDVKESDDGGERENLPPGSYVVLQLEKEEILAPHTHFCLICGKGFKRDANLRMHMRGHGDEYKTAAALAKPSKDSSLESAPVTRYSCPYVGCKRNKEHKKFQPLKTILCVKNHYKRSHCDKSYTCSRCNTKKFSVIADLKTHEKHCGRDKWLCSCGTTFSRKDKLFGHVALFQGHTPALPMDDIKVTGASEQPQGSEAMNTMVGSAGYNFPGSSSDDIPNLDMKMADDPRYFSPLSFDPCFGGLDDFTRPGFDISENPFSFLPSGSCSFGQQNGDS.

Composition is skewed to polar residues over residues 1–12 (MDSGLGRSSETS) and 19–40 (MASNATRNTDPDQQGVRFSSMD). 2 disordered regions span residues 1 to 43 (MDSG…DQPP) and 234 to 260 (CGGEGSEPIPMEDHDVKESDDGGEREN). Residues 244-260 (MEDHDVKESDDGGEREN) are compositionally biased toward basic and acidic residues. The C2H2-type 1 zinc finger occupies 282 to 304 (HFCLICGKGFKRDANLRMHMRGH). The C2H2-type 2; atypical zinc-finger motif lies at 390-421 (KHCGRDKWLCSCGTTFSRKDKLFGHVALFQGH).

The protein localises to the nucleus. Its function is as follows. Probable transcription factor that may be involved in aluminum tolerance. This is Zinc finger protein STOP1 homolog from Oryza sativa subsp. japonica (Rice).